Here is a 369-residue protein sequence, read N- to C-terminus: Histidinol-phosphate aminotransferase 2 (369 aa).

Lysine 229 carries the post-translational modification N6-(pyridoxal phosphate)lysine.

The protein belongs to the class-II pyridoxal-phosphate-dependent aminotransferase family. Histidinol-phosphate aminotransferase subfamily. As to quaternary structure, homodimer. Pyridoxal 5'-phosphate is required as a cofactor.

The catalysed reaction is L-histidinol phosphate + 2-oxoglutarate = 3-(imidazol-4-yl)-2-oxopropyl phosphate + L-glutamate. It participates in amino-acid biosynthesis; L-histidine biosynthesis; L-histidine from 5-phospho-alpha-D-ribose 1-diphosphate: step 7/9. This is Histidinol-phosphate aminotransferase 2 (hisC2) from Pseudomonas aeruginosa (strain ATCC 15692 / DSM 22644 / CIP 104116 / JCM 14847 / LMG 12228 / 1C / PRS 101 / PAO1).